We begin with the raw amino-acid sequence, 190 residues long: Potassium-transporting ATPase KdpC subunit (190 aa).

A helical transmembrane segment spans residues 10–30 (TFIFLLLITGGVYPLLTTVLG).

It belongs to the KdpC family. The system is composed of three essential subunits: KdpA, KdpB and KdpC.

The protein localises to the cell inner membrane. Its function is as follows. Part of the high-affinity ATP-driven potassium transport (or Kdp) system, which catalyzes the hydrolysis of ATP coupled with the electrogenic transport of potassium into the cytoplasm. This subunit acts as a catalytic chaperone that increases the ATP-binding affinity of the ATP-hydrolyzing subunit KdpB by the formation of a transient KdpB/KdpC/ATP ternary complex. This Escherichia coli (strain K12 / MC4100 / BW2952) protein is Potassium-transporting ATPase KdpC subunit.